The primary structure comprises 421 residues: Trimethyllysine dioxygenase, mitochondrial (421 aa).

The transit peptide at Met1–Asn15 directs the protein to the mitochondrion. 2 positions are modified to N6-acetyllysine: Lys179 and Lys236. Fe cation is bound by residues His242, Asp244, and His389.

Belongs to the gamma-BBH/TMLD family. As to quaternary structure, homodimer. Requires Fe(2+) as cofactor. L-ascorbate serves as cofactor.

It localises to the mitochondrion matrix. The enzyme catalyses N(6),N(6),N(6)-trimethyl-L-lysine + 2-oxoglutarate + O2 = (3S)-3-hydroxy-N(6),N(6),N(6)-trimethyl-L-lysine + succinate + CO2. It functions in the pathway amine and polyamine biosynthesis; carnitine biosynthesis. Functionally, converts trimethyllysine (TML) into hydroxytrimethyllysine (HTML). The sequence is that of Trimethyllysine dioxygenase, mitochondrial (Tmlhe) from Rattus norvegicus (Rat).